The following is a 568-amino-acid chain: Lariat debranching enzyme (568 aa).

Positions 8, 10, 39, and 84 each coordinate a divalent metal cation. The segment at Ser124 to Arg154 is lariat recognition loop. Residues His174, His226, and His228 each contribute to the a divalent metal cation site. The disordered stretch occupies residues Ile388–Ser568. Residues Pro417–Asn428 are compositionally biased toward polar residues. Over residues Ile432–Gly444 the composition is skewed to acidic residues. Residues Asp467–Lys480 are compositionally biased toward basic and acidic residues. Thr478 carries the post-translational modification Phosphothreonine. Positions Gly534–Gln549 are enriched in low complexity. Position 568 is a phosphoserine (Ser568).

The protein belongs to the lariat debranching enzyme family. The cofactor is Fe(2+). Zn(2+) is required as a cofactor. Requires Mn(2+) as cofactor.

Its subcellular location is the nucleus. With respect to regulation, active in presence of diverse metals including Fe(2+), Zn(2+), Mn(2+). Also activated by Ca(2+). Binds two metal cations in two adjacent alpha and beta metal-binding pockets. Its function is as follows. Cleaves the 2'-5' phosphodiester linkage at the branch point of excised lariat intron RNA and converts them into linear molecules that can be subsequently degraded, thereby facilitating ribonucleotide turnover. Linked to its role in pre-mRNA processing mechanism, may also participate in retrovirus replication and have an antiviral cell-intrinsic defense function. In Danio rerio (Zebrafish), this protein is Lariat debranching enzyme (dbr1).